Here is a 446-residue protein sequence, read N- to C-terminus: NAD kinase (446 aa).

Ser46, Ser48, Ser50, Ser55, and Ser64 each carry phosphoserine.

Belongs to the NAD kinase family. A divalent metal cation is required as a cofactor. In terms of tissue distribution, widely expressed but not detected in skeletal muscle.

It carries out the reaction NAD(+) + ATP = ADP + NADP(+) + H(+). The polypeptide is NAD kinase (NADK) (Homo sapiens (Human)).